Here is a 271-residue protein sequence, read N- to C-terminus: Elongation factor Ts (271 aa).

Positions 76-79 are involved in Mg(2+) ion dislocation from EF-Tu; the sequence is TDFV.

It belongs to the EF-Ts family.

The protein resides in the cytoplasm. Its function is as follows. Associates with the EF-Tu.GDP complex and induces the exchange of GDP to GTP. It remains bound to the aminoacyl-tRNA.EF-Tu.GTP complex up to the GTP hydrolysis stage on the ribosome. The chain is Elongation factor Ts from Mycolicibacterium vanbaalenii (strain DSM 7251 / JCM 13017 / BCRC 16820 / KCTC 9966 / NRRL B-24157 / PYR-1) (Mycobacterium vanbaalenii).